The following is a 171-amino-acid chain: 3-hydroxydecanoyl-[acyl-carrier-protein] dehydratase (171 aa).

His-70 is a catalytic residue.

It belongs to the thioester dehydratase family. FabA subfamily. Homodimer.

The protein localises to the cytoplasm. The enzyme catalyses a (3R)-hydroxyacyl-[ACP] = a (2E)-enoyl-[ACP] + H2O. It carries out the reaction (3R)-hydroxydecanoyl-[ACP] = (2E)-decenoyl-[ACP] + H2O. It catalyses the reaction (2E)-decenoyl-[ACP] = (3Z)-decenoyl-[ACP]. The protein operates within lipid metabolism; fatty acid biosynthesis. Its function is as follows. Necessary for the introduction of cis unsaturation into fatty acids. Catalyzes the dehydration of (3R)-3-hydroxydecanoyl-ACP to E-(2)-decenoyl-ACP and then its isomerization to Z-(3)-decenoyl-ACP. Can catalyze the dehydratase reaction for beta-hydroxyacyl-ACPs with saturated chain lengths up to 16:0, being most active on intermediate chain length. The chain is 3-hydroxydecanoyl-[acyl-carrier-protein] dehydratase from Shewanella sp. (strain ANA-3).